The sequence spans 142 residues: Endoribonuclease YbeY (142 aa).

Positions 100, 104, and 110 each coordinate Zn(2+).

It belongs to the endoribonuclease YbeY family. It depends on Zn(2+) as a cofactor.

Its subcellular location is the cytoplasm. Functionally, single strand-specific metallo-endoribonuclease involved in late-stage 70S ribosome quality control and in maturation of the 3' terminus of the 16S rRNA. The protein is Endoribonuclease YbeY of Helicobacter pylori (strain G27).